Consider the following 300-residue polypeptide: Cation-efflux pump FieF (300 aa).

The next 4 membrane-spanning stretches (helical) occupy residues 12–32, 39–59, 82–102, and 114–134; these read AAIAATVMASLLLLIKIFAWW, ILAALVDSLVDIAASLTNLLV, AALAQSMFISGSALFLFLTGI, and PGVGIVVTLIALVCTIILVTF. Residues Asp-45 and Asp-49 each contribute to the Zn(2+) site. His-153 and Asp-157 together coordinate Zn(2+). A helical transmembrane segment spans residues 164 to 184; the sequence is ILVALGLAWYGWHRADALFAL.

Belongs to the cation diffusion facilitator (CDF) transporter (TC 2.A.4) family. FieF subfamily. Homodimer.

The protein localises to the cell inner membrane. It carries out the reaction Zn(2+)(in) + H(+)(out) = Zn(2+)(out) + H(+)(in). The catalysed reaction is Cd(2+)(in) + H(+)(out) = Cd(2+)(out) + H(+)(in). It catalyses the reaction Fe(2+)(in) + H(+)(out) = Fe(2+)(out) + H(+)(in). In terms of biological role, divalent metal cation transporter which exports Zn(2+), Cd(2+) and possibly Fe(2+). May be involved in zinc and iron detoxification by efflux. The polypeptide is Cation-efflux pump FieF (Citrobacter koseri (strain ATCC BAA-895 / CDC 4225-83 / SGSC4696)).